Consider the following 72-residue polypeptide: Small ribosomal subunit protein bS18 (72 aa).

The protein belongs to the bacterial ribosomal protein bS18 family. Part of the 30S ribosomal subunit. Forms a tight heterodimer with protein bS6.

Functionally, binds as a heterodimer with protein bS6 to the central domain of the 16S rRNA, where it helps stabilize the platform of the 30S subunit. The polypeptide is Small ribosomal subunit protein bS18 (Francisella tularensis subsp. holarctica (strain FTNF002-00 / FTA)).